A 306-amino-acid polypeptide reads, in one-letter code: Acetyl-coenzyme A carboxylase carboxyl transferase subunit beta (306 aa).

Residues 25–294 (LWIKDPTSGE…APEPSHAFSK (270 aa)) form the CoA carboxyltransferase N-terminal domain. The tract at residues 287–306 (EPSHAFSKDSQTQISKTKAA) is disordered. Polar residues predominate over residues 294-306 (KDSQTQISKTKAA).

Belongs to the AccD/PCCB family. As to quaternary structure, acetyl-CoA carboxylase is a heterohexamer composed of biotin carboxyl carrier protein (AccB), biotin carboxylase (AccC) and two subunits each of ACCase subunit alpha (AccA) and ACCase subunit beta (AccD).

It localises to the cytoplasm. The enzyme catalyses N(6)-carboxybiotinyl-L-lysyl-[protein] + acetyl-CoA = N(6)-biotinyl-L-lysyl-[protein] + malonyl-CoA. The protein operates within lipid metabolism; malonyl-CoA biosynthesis; malonyl-CoA from acetyl-CoA: step 1/1. Functionally, component of the acetyl coenzyme A carboxylase (ACC) complex. Biotin carboxylase (BC) catalyzes the carboxylation of biotin on its carrier protein (BCCP) and then the CO(2) group is transferred by the transcarboxylase to acetyl-CoA to form malonyl-CoA. This Bartonella bacilliformis (strain ATCC 35685 / KC583 / Herrer 020/F12,63) protein is Acetyl-coenzyme A carboxylase carboxyl transferase subunit beta.